Here is a 176-residue protein sequence, read N- to C-terminus: MAKKRGKPEIDWTDDDKEIIWVSKSEIKRDSEHLKKLGAELIELTPQNLEKIPLDEDLKYAIRQAQSFKLEARRRQIQFIGKLLRNRDSAPIQDALDKVKNRHNQQQALLHKLELIRDQLINMGDASLNQLLSEYPQLDRQHLRNLIRMAQKEKQINKPAKNYHEILQYLKSELIV.

This sequence belongs to the DarP family.

The protein localises to the cytoplasm. In terms of biological role, member of a network of 50S ribosomal subunit biogenesis factors which assembles along the 30S-50S interface, preventing incorrect 23S rRNA structures from forming. Promotes peptidyl transferase center (PTC) maturation. In Haemophilus ducreyi (strain 35000HP / ATCC 700724), this protein is Dual-action ribosomal maturation protein DarP.